We begin with the raw amino-acid sequence, 259 residues long: Ribosomal RNA small subunit methyltransferase J (259 aa).

Residues 101–102 (RD), 117–118 (ER), 153–154 (SS), and Asp-176 contribute to the S-adenosyl-L-methionine site.

This sequence belongs to the methyltransferase superfamily. RsmJ family.

Its subcellular location is the cytoplasm. It catalyses the reaction guanosine(1516) in 16S rRNA + S-adenosyl-L-methionine = N(2)-methylguanosine(1516) in 16S rRNA + S-adenosyl-L-homocysteine + H(+). Functionally, specifically methylates the guanosine in position 1516 of 16S rRNA. The protein is Ribosomal RNA small subunit methyltransferase J of Vibrio campbellii (strain ATCC BAA-1116).